Reading from the N-terminus, the 341-residue chain is Killer cell immunoglobulin-like receptor 2DL3 (341 aa).

Positions 1–21 (MSLMVVSMVCVGFFLLQGAWP) are cleaved as a signal peptide. Residues 22–245 (HEGVHRKPSL…SETGNPRHLH (224 aa)) lie on the Extracellular side of the membrane. Ig-like C2-type domains are found at residues 42–107 (EETV…VTHS) and 142–205 (GESV…FRDS). 2 cysteine pairs are disulfide-bonded: cysteine 49–cysteine 100 and cysteine 149–cysteine 198. 3 N-linked (GlcNAc...) asparagine glycosylation sites follow: asparagine 84, asparagine 178, and asparagine 211. The tract at residues 220–239 (VTGNPSNSWPSPTEPSSETG) is disordered. Low complexity predominate over residues 223–239 (NPSNSWPSPTEPSSETG). A helical transmembrane segment spans residues 246–265 (VLIGTSVVIILFILLLFFLL). Topologically, residues 266-341 (HRWCCNKKNA…VYTELPNAEP (76 aa)) are cytoplasmic.

This sequence belongs to the immunoglobulin superfamily. Interacts with ARRB2.

It localises to the cell membrane. Its function is as follows. Receptor on natural killer (NK) cells for HLA-C alleles (HLA-Cw1, HLA-Cw3 and HLA-Cw7). Inhibits the activity of NK cells thus preventing cell lysis. The polypeptide is Killer cell immunoglobulin-like receptor 2DL3 (Homo sapiens (Human)).